Consider the following 246-residue polypeptide: Tyrosine recombinase XerD-like (246 aa).

The 72-residue stretch at 1–72 folds into the Core-binding (CB) domain; it reads MINDINNFIE…AVNQFLFFLY (72 aa). Residues 84–246 enclose the Tyr recombinase domain; that stretch reads QETEKITLAQ…TPITLERYYR (163 aa). Residues Lys-149 and Arg-212 contribute to the active site. The O-(3'-phospho-DNA)-tyrosine intermediate role is filled by Tyr-244.

The protein belongs to the 'phage' integrase family. XerD-like subfamily.

The protein resides in the cytoplasm. Functionally, putative tyrosine recombinase. Not involved in the cutting and rejoining of the recombining DNA molecules on dif(SL) site. The polypeptide is Tyrosine recombinase XerD-like (Streptococcus agalactiae serotype V (strain ATCC BAA-611 / 2603 V/R)).